The following is a 366-amino-acid chain: Chorismate synthase (366 aa).

The NADP(+) site is built by arginine 48 and arginine 54. FMN-binding positions include 125 to 127, 238 to 239, glycine 278, 293 to 297, and arginine 319; these read RSS, NA, and KPTSS.

The protein belongs to the chorismate synthase family. As to quaternary structure, homotetramer. The cofactor is FMNH2.

It carries out the reaction 5-O-(1-carboxyvinyl)-3-phosphoshikimate = chorismate + phosphate. Its pathway is metabolic intermediate biosynthesis; chorismate biosynthesis; chorismate from D-erythrose 4-phosphate and phosphoenolpyruvate: step 7/7. Functionally, catalyzes the anti-1,4-elimination of the C-3 phosphate and the C-6 proR hydrogen from 5-enolpyruvylshikimate-3-phosphate (EPSP) to yield chorismate, which is the branch point compound that serves as the starting substrate for the three terminal pathways of aromatic amino acid biosynthesis. This reaction introduces a second double bond into the aromatic ring system. This chain is Chorismate synthase, found in Burkholderia cenocepacia (strain HI2424).